A 356-amino-acid polypeptide reads, in one-letter code: Carminomycin 4-O-methyltransferase DnrK (356 aa).

Arginine 153 contacts S-adenosyl-L-methionine. Aspartate 163 is a substrate binding site. Residues glycine 187, glutamate 210, 237–238, and serine 252 contribute to the S-adenosyl-L-methionine site; that span reads DF. Substrate contacts are provided by asparagine 257 and arginine 303.

It belongs to the class I-like SAM-binding methyltransferase superfamily. Cation-independent O-methyltransferase family. As to quaternary structure, homodimer and homotetramer in equilibrium.

It catalyses the reaction carminomycin + S-adenosyl-L-methionine = daunorubicin + S-adenosyl-L-homocysteine + H(+). Its pathway is antibiotic biosynthesis; daunorubicin biosynthesis. It participates in antibiotic biosynthesis; carminomycin biosynthesis. Functionally, involved in the biosynthesis of the anthracyclines carminomycin and daunorubicin (daunomycin) which are aromatic polyketide antibiotics that exhibit high cytotoxicity and are widely applied in the chemotherapy of a variety of cancers. In vivo, catalyzes the transfer of a methyl group from S-adenosyl-L-methionine to the 4-O-position of carminomycin to form daunorubicin. In vitro, it also methylates the anthracyclines rhodomycin D (10-carbomethoxy-13-deoxycarminomycin) and 13-deoxy-carminomycin at the 4-hydroxyl position. It is quite specific with respect to the length of the carbohydrate chain at the C7 position, but it can accept substrates with bulky substituent at C10 position. The protein is Carminomycin 4-O-methyltransferase DnrK (dnrK) of Streptomyces peucetius.